Here is a 517-residue protein sequence, read N- to C-terminus: Bifunctional purine biosynthesis protein PurH (517 aa).

The region spanning methionine 1 to threonine 146 is the MGS-like domain.

This sequence belongs to the PurH family.

The catalysed reaction is (6R)-10-formyltetrahydrofolate + 5-amino-1-(5-phospho-beta-D-ribosyl)imidazole-4-carboxamide = 5-formamido-1-(5-phospho-D-ribosyl)imidazole-4-carboxamide + (6S)-5,6,7,8-tetrahydrofolate. It catalyses the reaction IMP + H2O = 5-formamido-1-(5-phospho-D-ribosyl)imidazole-4-carboxamide. The protein operates within purine metabolism; IMP biosynthesis via de novo pathway; 5-formamido-1-(5-phospho-D-ribosyl)imidazole-4-carboxamide from 5-amino-1-(5-phospho-D-ribosyl)imidazole-4-carboxamide (10-formyl THF route): step 1/1. It participates in purine metabolism; IMP biosynthesis via de novo pathway; IMP from 5-formamido-1-(5-phospho-D-ribosyl)imidazole-4-carboxamide: step 1/1. In Prochlorococcus marinus (strain MIT 9313), this protein is Bifunctional purine biosynthesis protein PurH.